A 309-amino-acid chain; its full sequence is Porphobilinogen deaminase (309 aa).

Cys-242 bears the S-(dipyrrolylmethanemethyl)cysteine mark.

This sequence belongs to the HMBS family. As to quaternary structure, monomer. Dipyrromethane is required as a cofactor.

The catalysed reaction is 4 porphobilinogen + H2O = hydroxymethylbilane + 4 NH4(+). It participates in porphyrin-containing compound metabolism; protoporphyrin-IX biosynthesis; coproporphyrinogen-III from 5-aminolevulinate: step 2/4. Tetrapolymerization of the monopyrrole PBG into the hydroxymethylbilane pre-uroporphyrinogen in several discrete steps. This chain is Porphobilinogen deaminase, found in Actinobacillus succinogenes (strain ATCC 55618 / DSM 22257 / CCUG 43843 / 130Z).